Reading from the N-terminus, the 556-residue chain is Thermosome subunit beta (556 aa).

The disordered stretch occupies residues 530-556 (LSTDKGDDDGGAGGMGGGMGGGMGGMM). Positions 540 to 556 (GAGGMGGGMGGGMGGMM) are enriched in gly residues.

This sequence belongs to the TCP-1 chaperonin family. In terms of assembly, forms an oligomeric complex of eight-membered rings.

Molecular chaperone; binds unfolded polypeptides in vitro, and has a weak ATPase activity. The polypeptide is Thermosome subunit beta (thsB) (Halobacterium salinarum (strain ATCC 700922 / JCM 11081 / NRC-1) (Halobacterium halobium)).